The chain runs to 278 residues: uncharacterized protein (278 aa).

This sequence belongs to the manganese catalase family.

This is an uncharacterized protein from Bacillus subtilis (strain 168).